The primary structure comprises 205 residues: Ribonuclease HII (205 aa).

The RNase H type-2 domain occupies 15–205 (SRVCGIDEAG…SFKLRKLGEK (191 aa)). A divalent metal cation is bound by residues Asp-21, Glu-22, and Asp-117.

Belongs to the RNase HII family. The cofactor is Mn(2+). Requires Mg(2+) as cofactor.

It is found in the cytoplasm. The enzyme catalyses Endonucleolytic cleavage to 5'-phosphomonoester.. In terms of biological role, endonuclease that specifically degrades the RNA of RNA-DNA hybrids. This Chlorobaculum parvum (strain DSM 263 / NCIMB 8327) (Chlorobium vibrioforme subsp. thiosulfatophilum) protein is Ribonuclease HII.